A 317-amino-acid polypeptide reads, in one-letter code: Probable cell division protein WhiA (317 aa).

The segment at residues 281–314 is a DNA-binding region (H-T-H motif); that stretch reads TLKELGEMINPPIGKSGVNHRLRKLDQIADRERG.

Belongs to the WhiA family.

Its function is as follows. Involved in cell division and chromosome segregation. The chain is Probable cell division protein WhiA from Alkaliphilus metalliredigens (strain QYMF).